The primary structure comprises 151 residues: MNAYNKADSFSLESDSIKDVIHDYICWLSMTDEMRPSIGNVFKAMETFKIDAVRYYDGNIYDLAKDINAMSFDSFIRSLQNISSKKDKLTVYGTMGLLSIVVDINKGCDISNIKFAAGIIILMEYIFDDTDMSHLKVALYRRIQRRDDVDR.

This sequence belongs to the orthopoxvirus OPG029 family. As to quaternary structure, interacts with host TANK, TBKBP1 and AZI2; these interactions prevent interferon production. Interacts with host STAT2.

Prevents establishment of cellular antiviral state by blocking virus-induced phosphorylation and activation of interferon regulatory factors 3/IRF3 and 7/IRF7, transcription factors critical for the induction of interferons alpha and beta. This blockage is produced through the inhibition of host TBK1, by binding host TBK1 adapter proteins TBKBP1 and AZI2, thereby producing a strong inhibition of the phosphorylation and activation of IRF3 and IRF7. Also acts as an inhibitor of the cellular response to type I IFN by interacting with host STAT2. Mechanistically, exerts its inhibitory effect after host ISGF3 complex (composed of STAT1, STAT2 and IRF9) binding to the interferon stimulated response element (ISRE). This chain is IFN signaling evasion protein OPG029 (OPG029), found in Homo sapiens (Human).